Consider the following 677-residue polypeptide: MGSGYQLLQLPRERFRKTSFLVWVIILFQRAISMPLGIVTNSTLKATEIDQLVCRDKLSSTSQLKSVGLNLEGNGIATDVPSATKRWGFRSGVPPKVVSYEAGEWAENCYNLEIKKSDGSECLPLPPDGVRGFPRCRYVHKVQGTGPCPGDLAFHKNGAFFLYDRLASTVIYRGTTFTEGVVAFLILSEPKKHFWKATPAHEPVNTTDDSTSYYMTLTLSYEMSNFGGKESNTLFKVDNHTYVQLDRPHTPQFLVQLNETLRRNNRLSNSTGRLTWTLDPKIEPDVGEWAFWETKKNFSQQLHGENLHFQILSTHTNNSSDQSPAGTVQGKISYHPPTNNSELVPTDSPPVVSVLTAGRTEEMSTQGLTNGETITGFTANPMTTTIAPSPTMTSEVDNNVPSEQPNNTASIEDSPPSASNETIDHSEMNPIQGSNNSAQSPQTKTTPAPTASPMTQDPQETANSSKLGTSPGSAAEPSQPGFTINTVSKVADSLSPTRKQKRSVRQNTANKCNPDLHYWTAVDEGAAVGLAWIPYFGPAAEGIYIEGVMHNQNGLICGLRQLANETTQALQLFLRATTELRTYSLLNRKAIDFLLQRWGGTCRILGPSCCIEPHDWTKNITDEINQIKHDFIDNPLPDHGDDLNLWTGWRQWIPAGIGIIGVIIAIIALLCICKILC.

The signal sequence occupies residues 1 to 33 (MGSGYQLLQLPRERFRKTSFLVWVIILFQRAIS). Topologically, residues 34–651 (MPLGIVTNST…DLNLWTGWRQ (618 aa)) are extracellular. Asn-41 carries an N-linked (GlcNAc...) asparagine; by host glycan. 5 cysteine pairs are disulfide-bonded: Cys-54–Cys-610, Cys-109–Cys-136, Cys-122–Cys-148, Cys-512–Cys-557, and Cys-602–Cys-609. The receptor-binding stretch occupies residues 55–202 (RDKLSSTSQL…HFWKATPAHE (148 aa)). N-linked (GlcNAc...) asparagine; by host glycosylation is found at Asn-205, Asn-239, Asn-258, Asn-269, Asn-297, Asn-317, Asn-318, Asn-339, Asn-406, Asn-420, Asn-435, and Asn-463. The segment at 306-486 (NLHFQILSTH…PSQPGFTINT (181 aa)) is mucin-like region. A compositionally biased stretch (polar residues) spans 315-326 (HTNNSSDQSPAG). 3 disordered regions span residues 315 to 349 (HTNN…TDSP), 370 to 482 (NGET…QPGF), and 489 to 508 (KVAD…RQNT). 2 stretches are compositionally biased toward polar residues: residues 370 to 421 (NGET…ASNE) and 429 to 472 (NPIQ…TSPG). The interval 525–540 (GAAVGLAWIPYFGPAA) is fusion peptide. Residues 555 to 596 (LICGLRQLANETTQALQLFLRATTELRTYSLLNRKAIDFLLQ) are a coiled coil. A glycan (N-linked (GlcNAc...) asparagine; by host) is linked at Asn-564. Positions 616 to 635 (WTKNITDEINQIKHDFIDNP) form a coiled coil. An N-linked (GlcNAc...) asparagine; by host glycan is attached at Asn-619. Residues 652–672 (WIPAGIGIIGVIIAIIALLCI) traverse the membrane as a helical segment. Residues Cys-671 and Cys-673 are each lipidated (S-palmitoyl cysteine; by host). Over 673 to 677 (CKILC) the chain is Cytoplasmic.

This sequence belongs to the filoviruses glycoprotein family. As to quaternary structure, homotrimer; each monomer consists of a GP1 and a GP2 subunit linked by disulfide bonds. The resulting peplomers (GP1,2) protrude from the virus surface as spikes. Interacts with host integrin alpha-V/ITGAV. Interacts with host CLEC10A. Binds also to host CD209 and CLEC4M/DC-SIGN(R). Interacts with host FOLR1. Interacts with BST2; this interaction inhibits the antiviral effect of BST2 and this allows viral release from infected cells. Interacts with host FCN1; this interaction enhances viral entry. Interacts with host TLR4; this interaction induces cell death in T-lymphocytes or proinflammatory cytokines and SOCS1 production in monocytes. Interacts with host entry receptor NPC1. In terms of assembly, GP1 and GP2delta are part of GP1,2delta soluble complexes released by ectodomain shedding. The signal peptide region modulates GP's high mannose glycosylation, thereby determining the efficiency of the interactions with DC-SIGN(R). Post-translationally, N-glycosylated. In terms of processing, O-glycosylated in the mucin-like region. Palmitoylation of GP2 is not required for its function. Post-translationally, specific enzymatic cleavages in vivo yield mature proteins. The precursor is processed into GP1 and GP2 by host cell furin in the trans Golgi, and maybe by other host proteases, to yield the mature GP1 and GP2 proteins. The cleavage site corresponds to the furin optimal cleavage sequence [KR]-X-[KR]-R. This cleavage does not seem to be required for function. After the internalization of the virus into cell endosomes, GP1 C-terminus is removed by the endosomal proteases cathepsin B, cathepsin L, or both, leaving a 19-kDa N-terminal fragment which is further digested by cathepsin B. Proteolytic processing of GP1,2 by host ADAM17 can remove the transmembrane anchor of GP2 and leads to shedding of complexes consisting in GP1 and truncated GP2 (GP1,2delta).

The protein resides in the virion membrane. It localises to the host cell membrane. It is found in the secreted. Trimeric GP1,2 complexes form the virion surface spikes and mediate the viral entry processes, with GP1 acting as the receptor-binding subunit and GP2 as the membrane fusion subunit. At later times of infection, down-regulates the expression of various host cell surface molecules that are essential for immune surveillance and cell adhesion. Down-modulates several integrins including ITGA1, ITGA2, ITGA3, ITGA4, ITGA5, ITGA6, ITGAV and ITGB1. This decrease in cell adhesion molecules may lead to cell detachment, contributing to the disruption of blood vessel integrity and hemorrhages developed during infection (cytotoxicity). Interacts with host TLR4 and thereby stimulates the differentiation and activation of monocytes leading to bystander death of T-lymphocytes. Down-regulates as well the function of host natural killer cells. Counteracts the antiviral effect of host BST2/tetherin that restricts release of progeny virions from infected cells. However, cooperates with VP40 and host BST2 to activate canonical NF-kappa-B pathway in a manner dependent on neddylation. Its function is as follows. Functions as a decoy for anti-GP1,2 antibodies thereby contributing to viral immune evasion. Interacts and activates host macrophages and dendritic cells inducing up-regulation of cytokine transcription. This effect is mediated throught activation of host TLR4. Functionally, responsible for binding to the receptor(s) on target cells. Interacts with CD209/DC-SIGN and CLEC4M/DC-SIGNR which act as cofactors for virus entry into dendritic cells (DCs) and endothelial cells. Binding to the macrophage specific lectin CLEC10A also seems to enhance virus infectivity. Interaction with FOLR1/folate receptor alpha may be a cofactor for virus entry in some cell types, although results are contradictory. Members of the Tyro3 receptor tyrosine kinase family also seem to be cell entry factors in filovirus infection. Once attached, the virions are internalized through clathrin-dependent endocytosis and/or macropinocytosis. After internalization of the virus into the endosomes of the host cell, proteolysis of GP1 by two cysteine proteases, CTSB/cathepsin B and CTSL/cathepsin L removes the glycan cap and allows GP1 binding to the host entry receptor NPC1. NPC1-binding, Ca(2+) and acidic pH induce a conformational change of GP2, which unmasks its fusion peptide and permit membranes fusion. In terms of biological role, acts as a class I viral fusion protein. Under the current model, the protein has at least 3 conformational states: pre-fusion native state, pre-hairpin intermediate state, and post-fusion hairpin state. During viral and target cell membrane fusion, the coiled coil regions (heptad repeats) assume a trimer-of-hairpins structure, positioning the fusion peptide in close proximity to the C-terminal region of the ectodomain. The formation of this structure appears to drive apposition and subsequent fusion of viral and target cell membranes. Responsible for penetration of the virus into the cell cytoplasm by mediating the fusion of the membrane of the endocytosed virus particle with the endosomal membrane. Low pH in endosomes induces an irreversible conformational change in GP2, releasing the fusion hydrophobic peptide. This chain is Envelope glycoprotein (GP), found in Homo sapiens (Human).